A 221-amino-acid chain; its full sequence is GTP-binding nuclear protein Ran-2 (221 aa).

Residues 10–174 (DYPSFKLVIV…LYLARKLAGD (165 aa)) enclose the Small GTPase Ran-type domain. Residue 21–28 (DGGTGKTT) participates in GTP binding. Residues 40 to 48 (KKYEPTIGV) are switch-I. Residues Gly71, 125-128 (NKVD), and 153-155 (SAK) each bind GTP. A switch-II region spans residues 71–87 (GQEKFGGLRDGYYIHGQ). The span at 202 to 212 (ADLAAAAAQPL) shows a compositional bias: low complexity. Residues 202 to 221 (ADLAAAAAQPLPDDDDDAFE) form a disordered region.

This sequence belongs to the small GTPase superfamily. Ran family. In terms of assembly, found in a nuclear export complex with RanGTP, exportin and pre-miRNA. Interacts with RanBP1a and RanBP1b. Interacts with PHRIP1. Interacts with KPNB1. Binds to PHIP1.

It localises to the nucleus. The protein resides in the nucleus envelope. Its function is as follows. GTP-binding protein involved in nucleocytoplasmic transport. Required for the import of protein into the nucleus and also for RNA export. Involved in chromatin condensation and control of cell cycle. The polypeptide is GTP-binding nuclear protein Ran-2 (Arabidopsis thaliana (Mouse-ear cress)).